The sequence spans 87 residues: Small ribosomal subunit protein bS20 (87 aa).

A disordered region spans residues 1–26; it reads MANIKSAKKRAIQAEKARKHNASRRS.

It belongs to the bacterial ribosomal protein bS20 family.

In terms of biological role, binds directly to 16S ribosomal RNA. In Tolumonas auensis (strain DSM 9187 / NBRC 110442 / TA 4), this protein is Small ribosomal subunit protein bS20.